Here is a 919-residue protein sequence, read N- to C-terminus: Chitin synthase 1 (919 aa).

Disordered stretches follow at residues 1 to 69 (MSYD…SFQT) and 109 to 134 (NLAS…ALGP). The span at 11-30 (GQGRDYARQQRQQRSYQLSD) shows a compositional bias: low complexity. N-linked (GlcNAc...) asparagine glycans are attached at residues N187 and N556. 7 helical membrane-spanning segments follow: residues 594–614 (IVLL…SIII), 630–650 (LVVF…FLVL), 668–688 (IASF…SLWL), 713–733 (VLIA…ILYA), 742–762 (FPQY…YAFC), 843–863 (LVAF…NVNG), and 887–919 (IILW…FRKT).

Belongs to the chitin synthase family. Class III subfamily.

It localises to the cell membrane. The protein localises to the cytoplasmic vesicle membrane. It carries out the reaction [(1-&gt;4)-N-acetyl-beta-D-glucosaminyl](n) + UDP-N-acetyl-alpha-D-glucosamine = [(1-&gt;4)-N-acetyl-beta-D-glucosaminyl](n+1) + UDP + H(+). Its function is as follows. Polymerizes chitin, a structural polymer of the cell wall and septum, by transferring the sugar moiety of UDP-GlcNAc to the non-reducing end of the growing chitin polymer. The protein is Chitin synthase 1 of Mycosarcoma maydis (Corn smut fungus).